We begin with the raw amino-acid sequence, 134 residues long: MYRTLLKSKVHRIKITGADLHYEGSLTLDEEIMEAANLIPFEKIEVYNVNNGQRFSTYVIPGVRYSGECILNGAAARLGHYGDIIIIASYAAVNEKDLESFKVNLVYIDENTNTIKEKKEVLALNSKVLAKTNE.

The active-site Schiff-base intermediate with substrate; via pyruvic acid is Ser-25. The residue at position 25 (Ser-25) is a Pyruvic acid (Ser). Substrate is bound at residue Thr-57. Tyr-58 (proton donor) is an active-site residue. Substrate is bound at residue 73-75 (GAA).

Belongs to the PanD family. As to quaternary structure, heterooctamer of four alpha and four beta subunits. Pyruvate is required as a cofactor. In terms of processing, is synthesized initially as an inactive proenzyme, which is activated by self-cleavage at a specific serine bond to produce a beta-subunit with a hydroxyl group at its C-terminus and an alpha-subunit with a pyruvoyl group at its N-terminus.

The protein localises to the cytoplasm. It catalyses the reaction L-aspartate + H(+) = beta-alanine + CO2. It functions in the pathway cofactor biosynthesis; (R)-pantothenate biosynthesis; beta-alanine from L-aspartate: step 1/1. In terms of biological role, catalyzes the pyruvoyl-dependent decarboxylation of aspartate to produce beta-alanine. This is Aspartate 1-decarboxylase from Sulfurihydrogenibium sp. (strain YO3AOP1).